Here is a 366-residue protein sequence, read N- to C-terminus: sn-glycerol-3-phosphate import ATP-binding protein UgpC (366 aa).

Positions 4-235 (VTLRNVRKTY…PASTFVASFI (232 aa)) constitute an ABC transporter domain. 37–44 (GPSGCGKS) is an ATP binding site.

This sequence belongs to the ABC transporter superfamily. sn-glycerol-3-phosphate importer (TC 3.A.1.1.3) family. In terms of assembly, the complex is composed of two ATP-binding proteins (UgpC), two transmembrane proteins (UgpA and UgpE) and a solute-binding protein (UgpB).

The protein localises to the cell inner membrane. It catalyses the reaction sn-glycerol 3-phosphate(out) + ATP + H2O = sn-glycerol 3-phosphate(in) + ADP + phosphate + H(+). Functionally, part of the ABC transporter complex UgpBAEC involved in sn-glycerol-3-phosphate (G3P) import. Responsible for energy coupling to the transport system. The sequence is that of sn-glycerol-3-phosphate import ATP-binding protein UgpC from Rhodopseudomonas palustris (strain BisB18).